We begin with the raw amino-acid sequence, 343 residues long: N-acetyl-gamma-glutamyl-phosphate reductase (343 aa).

Cys147 is an active-site residue.

This sequence belongs to the NAGSA dehydrogenase family. Type 1 subfamily.

It localises to the cytoplasm. The catalysed reaction is N-acetyl-L-glutamate 5-semialdehyde + phosphate + NADP(+) = N-acetyl-L-glutamyl 5-phosphate + NADPH + H(+). The protein operates within amino-acid biosynthesis; L-arginine biosynthesis; N(2)-acetyl-L-ornithine from L-glutamate: step 3/4. Catalyzes the NADPH-dependent reduction of N-acetyl-5-glutamyl phosphate to yield N-acetyl-L-glutamate 5-semialdehyde. The chain is N-acetyl-gamma-glutamyl-phosphate reductase from Listeria innocua serovar 6a (strain ATCC BAA-680 / CLIP 11262).